Consider the following 234-residue polypeptide: MSILHATILTVFPEMFPGTLGDSLAGQALKKNIWSYDVINIRDFGLTKHKNVDDEAYGGGDGLIMRPDVLGNAIEHALSLNPNASIYYPSPRGRVFTQSFTKEMLKNKNLIFLCGRYEGIDERVIEEYNVEEISVGDYILSGGEIPTLAILDCLIRLLPGVLMNQNTLSSESFEEDGEFKGGLECSLYTRPKIWRGRAVPSVLLSGNHKLINEWKKEQSRMITKLRRPELLKDL.

Residues Gly115 and 135–140 (VGDYIL) each bind S-adenosyl-L-methionine.

This sequence belongs to the RNA methyltransferase TrmD family. Homodimer.

It is found in the cytoplasm. It carries out the reaction guanosine(37) in tRNA + S-adenosyl-L-methionine = N(1)-methylguanosine(37) in tRNA + S-adenosyl-L-homocysteine + H(+). Specifically methylates guanosine-37 in various tRNAs. The sequence is that of tRNA (guanine-N(1)-)-methyltransferase from Rickettsia akari (strain Hartford).